A 390-amino-acid chain; its full sequence is Lipid-A-disaccharide synthase (390 aa).

It belongs to the LpxB family.

It carries out the reaction a lipid X + a UDP-2-N,3-O-bis[(3R)-3-hydroxyacyl]-alpha-D-glucosamine = a lipid A disaccharide + UDP + H(+). Its pathway is bacterial outer membrane biogenesis; LPS lipid A biosynthesis. Its function is as follows. Condensation of UDP-2,3-diacylglucosamine and 2,3-diacylglucosamine-1-phosphate to form lipid A disaccharide, a precursor of lipid A, a phosphorylated glycolipid that anchors the lipopolysaccharide to the outer membrane of the cell. This chain is Lipid-A-disaccharide synthase, found in Haemophilus influenzae (strain PittEE).